The primary structure comprises 759 residues: TSK-associating protein 1 (759 aa).

The N-terminal stretch at 1–29 (MEIYTMKTNFLVLALSLCILLSSFHEVSC) is a signal peptide. The disordered stretch occupies residues 55 to 74 (GKDDEDQSAKIQSENQNNTT). A compositionally biased stretch (polar residues) spans 63-74 (AKIQSENQNNTT). EFE repeat repeat units follow at residues 91 to 138 (VGSV…DEEL), 139 to 176 (SAHR…DEEH), 177 to 215 (SAKR…DEEH), 216 to 254 (SAKR…DEEQ), 255 to 293 (SAKR…EEEH), 294 to 329 (AAKG…DKEH), 330 to 368 (FTAA…DDEQ), 369 to 407 (SAKR…NEEQ), 408 to 443 (SAKR…LEEE), and 444 to 473 (SAKR…DKEE). The segment at 91-473 (VGSVSDESVG…GINAKADKEE (383 aa)) is 10 X approximate EFE repeat. Coiled coils occupy residues 142–461 (RQKM…FEEA) and 685–734 (IKKL…AKDE). Disordered stretches follow at residues 154 to 184 (EAAS…QSLL), 200 to 219 (QLKV…SAKR), 271 to 332 (AASK…HFTA), and 393 to 414 (LKAN…RKSM).

In terms of assembly, homomultimer. Interacts (via C-terminal domain) with GIP1, CSN1 (via N-terminal domain) and TSK (via TPR repeats). Post-translationally, binds calcium through the EFE repeats. Expressed preferentially in flowers and shoot apex.

It is found in the endoplasmic reticulum lumen. Its subcellular location is the nucleus envelope. It localises to the cytoplasm. Functionally, involved in seedling development in the dark. May be involved, when interacting with TSK, in the organization of spindle microtubules and may participate, when interacting with GIP1, in structural links between the nuclear envelope and the cytoskeleton. The sequence is that of TSK-associating protein 1 (TSA1) from Arabidopsis thaliana (Mouse-ear cress).